The sequence spans 351 residues: Blue-sensitive opsin (351 aa).

Residues methionine 1–isoleucine 40 are Extracellular-facing. Residue asparagine 21 is glycosylated (N-linked (GlcNAc...) asparagine). Residues phenylalanine 41–cysteine 65 form a helical membrane-spanning segment. Topologically, residues threonine 66–asparagine 77 are cytoplasmic. Residues tyrosine 78–phenylalanine 103 traverse the membrane as a helical segment. Residues asparagine 104–glutamate 117 lie on the Extracellular side of the membrane. Residues cysteine 114 and cysteine 191 are joined by a disulfide bond. The helical transmembrane segment at glycine 118–phenylalanine 137 threads the bilayer. Residues glutamate 138 to histidine 156 are Cytoplasmic-facing. A helical membrane pass occupies residues alanine 157–serine 180. The Extracellular portion of the chain corresponds to arginine 181 to serine 206. The chain crosses the membrane as a helical span at residues tyrosine 207–leucine 234. The Cytoplasmic portion of the chain corresponds to lysine 235–lysine 256. A helical membrane pass occupies residues methionine 257–valine 280. Residues serine 281–aspartate 288 lie on the Extracellular side of the membrane. Residues leucine 289–methionine 313 form a helical membrane-spanning segment. N6-(retinylidene)lysine is present on lysine 300. At asparagine 314–lysine 351 the chain is on the cytoplasmic side.

This sequence belongs to the G-protein coupled receptor 1 family. Opsin subfamily. Phosphorylated on some or all of the serine and threonine residues present in the C-terminal region. In terms of tissue distribution, the color pigments are found in the cone photoreceptor cells.

It is found in the membrane. Functionally, visual pigments are the light-absorbing molecules that mediate vision. They consist of an apoprotein, opsin, covalently linked to cis-retinal. This Carassius auratus (Goldfish) protein is Blue-sensitive opsin.